We begin with the raw amino-acid sequence, 578 residues long: Acyl-coenzyme A synthetase ACSM5, mitochondrial (578 aa).

A mitochondrion-targeting transit peptide spans methionine 1–isoleucine 22. Lysine 96 carries the post-translational modification N6-acetyllysine; alternate. The residue at position 96 (lysine 96) is an N6-succinyllysine; alternate. An N6-acetyllysine modification is found at lysine 151. Threonine 229–lysine 237 is a binding site for ATP. An N6-acetyllysine; alternate modification is found at lysine 302. Lysine 302 is subject to N6-succinyllysine; alternate. Lysine 335 is subject to N6-acetyllysine. ATP is bound by residues glutamate 367–serine 372, aspartate 454, arginine 469, and lysine 565.

Belongs to the ATP-dependent AMP-binding enzyme family. The cofactor is Mg(2+). Requires Mn(2+) as cofactor.

The protein localises to the mitochondrion matrix. The enzyme catalyses a medium-chain fatty acid + ATP + CoA = a medium-chain fatty acyl-CoA + AMP + diphosphate. Its function is as follows. Catalyzes the activation of fatty acids by CoA to produce an acyl-CoA, the first step in fatty acid metabolism. The chain is Acyl-coenzyme A synthetase ACSM5, mitochondrial (Acsm5) from Mus musculus (Mouse).